The chain runs to 306 residues: Anamorsin homolog (306 aa).

Over residues 1–25 the composition is skewed to basic and acidic residues; that stretch reads MVPPREDVTVRIVCERRRTAGKEAR. Residues 1–51 are disordered; it reads MVPPREDVTVRIVCERRRTAGKEARPPPSAKPTPGNTSSHPNAKETHRSNE. Residues 59 to 190 form an N-terminal SAM-like domain region; the sequence is KQSHRRSIMA…RRNNTTNSVA (132 aa). A linker region spans residues 191 to 218; that stretch reads TLNFASNNNNGNDLLIDEDNLLTDASNL. [2Fe-2S] cluster is bound by residues C236, C242, C245, and C247. Residues 236-247 are fe-S binding site A; that stretch reads CSGRAPCDDCTC. Basic and acidic residues predominate over residues 252-265; sequence GAKEGNSEQPKEIK. Positions 252-272 are disordered; that stretch reads GAKEGNSEQPKEIKSSSCGKC. The [4Fe-4S] cluster site is built by C269, C272, C280, and C283. Short sequence motifs (cx2C motif) lie at residues 269–272 and 280–283; these read CGKC and CASC. Residues 269–283 are fe-S binding site B; it reads CGKCSLGDAFRCASC.

The protein belongs to the anamorsin family. As to quaternary structure, monomer. It depends on [2Fe-2S] cluster as a cofactor. [4Fe-4S] cluster serves as cofactor.

Its subcellular location is the cytoplasm. The protein resides in the mitochondrion intermembrane space. Its function is as follows. Component of the cytosolic iron-sulfur (Fe-S) protein assembly (CIA) machinery. Required for the maturation of extramitochondrial Fe-S proteins. Part of an electron transfer chain functioning in an early step of cytosolic Fe-S biogenesis, facilitating the de novo assembly of a [4Fe-4S] cluster on the cytosolic Fe-S scaffold complex. Electrons are transferred from NADPH via a FAD- and FMN-containing diflavin oxidoreductase. Together with the diflavin oxidoreductase, also required for the assembly of the diferric tyrosyl radical cofactor of ribonucleotide reductase (RNR), probably by providing electrons for reduction during radical cofactor maturation in the catalytic small subunit. In Phaeodactylum tricornutum (strain CCAP 1055/1), this protein is Anamorsin homolog.